The chain runs to 103 residues: Nucleoid-associated protein SUN_2278 (103 aa).

The protein belongs to the YbaB/EbfC family. In terms of assembly, homodimer.

It is found in the cytoplasm. Its subcellular location is the nucleoid. Its function is as follows. Binds to DNA and alters its conformation. May be involved in regulation of gene expression, nucleoid organization and DNA protection. This chain is Nucleoid-associated protein SUN_2278, found in Sulfurovum sp. (strain NBC37-1).